Reading from the N-terminus, the 493-residue chain is 3-ketoacyl-CoA synthase 16 (493 aa).

The signal sequence occupies residues 1–35 (MDYPMKKVKIFFNYLMAHRFKLCFLPLMVAIAVEA). The chain crosses the membrane as a helical span at residues 52–74 (NNHTSLTMFFLYLALGSTLYLMT). Positions 71–366 (YLMTRPKPVY…FFVRFVKKKF (296 aa)) constitute an FAE domain. Residues Cys221, His300, His384, His388, His417, and Asn421 contribute to the active site.

It belongs to the thiolase-like superfamily. Chalcone/stilbene synthases family. Expressed in siliques.

It is found in the membrane. The catalysed reaction is a very-long-chain acyl-CoA + malonyl-CoA + H(+) = a very-long-chain 3-oxoacyl-CoA + CO2 + CoA. It functions in the pathway lipid metabolism; fatty acid biosynthesis. This is 3-ketoacyl-CoA synthase 16 from Arabidopsis thaliana (Mouse-ear cress).